Reading from the N-terminus, the 554-residue chain is Movement protein Hsp70h (554 aa).

Belongs to the heat shock protein 70 family.

It is found in the virion. Functionally, transports viral genome to neighboring plant cells directly through plasmosdesmata, without any budding. The movement protein allows efficient cell to cell propagation, by bypassing the host cell wall barrier. Two movement proteins, p6, Hsp70h and three structural proteins, CP, CPm, and P64 are essential for cell-cell movement. Also plays a role in virion formation. Together with CPm and p64, encapsidates the 5'-terminal portion of the viral genome. This is Movement protein Hsp70h from Lettuce infectious yellows virus (isolate United States/92) (LIYV).